We begin with the raw amino-acid sequence, 152 residues long: Protein X (152 aa).

The interval 68-115 (PCALRFTSATWRCMETPMNSVTCLRKRTLGLRTAPPTVMEQYIKDCLF) is mitochondrial targeting sequence.

The protein belongs to the orthohepadnavirus protein X family. May form homodimer. May interact with host CEBPA, CFLAR, CREB1, DDB1, E4F1, HBXIP, HSPD1/HSP60, NFKBIA, POLR2E and SMAD4. Interacts with host SMC5-SMC6 complex and induces its degradation. Interacts with host TRPC4AP; leading to prevent ubiquitination of TRPC4AP. Interacts with host PLSCR1; this interaction promotes ubiquitination and degradation of HBx and impairs HBx-mediated cell proliferation. Post-translationally, a fraction may be phosphorylated in insect cells and HepG2 cells, a human hepatoblastoma cell line. Phosphorylated in vitro by host protein kinase C or mitogen-activated protein kinase. N-acetylated in insect cells.

It localises to the host cytoplasm. Its subcellular location is the host nucleus. The protein localises to the host mitochondrion. Multifunctional protein that plays a role in silencing host antiviral defenses and promoting viral transcription. Does not seem to be essential for HBV infection. May be directly involved in development of cirrhosis and liver cancer (hepatocellular carcinoma). Most of cytosolic activities involve modulation of cytosolic calcium. The effect on apoptosis is controversial depending on the cell types in which the studies have been conducted. May induce apoptosis by localizing in mitochondria and causing loss of mitochondrial membrane potential. May also modulate apoptosis by binding host CFLAR, a key regulator of the death-inducing signaling complex (DISC). Promotes viral transcription by using the host E3 ubiquitin ligase DDB1 to target the SMC5-SMC6 complex to proteasomal degradation. This host complex would otherwise bind to viral episomal DNA, and prevents its transcription. Moderately stimulates transcription of many different viral and cellular transcription elements. Promoters and enhancers stimulated by HBx contain DNA binding sites for NF-kappa-B, AP-1, AP-2, c-EBP, ATF/CREB, or the calcium-activated factor NF-AT. The polypeptide is Protein X (Lagothrix lagotricha (Brown woolly monkey)).